Consider the following 128-residue polypeptide: uncharacterized protein (128 aa).

2 helical membrane passes run 33–53 (LLYI…VCYV) and 61–81 (FFCW…VIIY). Residues 99–120 (DSLNQNVGESQSNEPPKYTSTF) are compositionally biased toward polar residues. The interval 99-128 (DSLNQNVGESQSNEPPKYTSTFMDELDKQD) is disordered.

The protein resides in the membrane. This is an uncharacterized protein from Schizosaccharomyces pombe (strain 972 / ATCC 24843) (Fission yeast).